The following is an 81-amino-acid chain: Large ribosomal subunit protein bL28 (81 aa).

It belongs to the bacterial ribosomal protein bL28 family.

The polypeptide is Large ribosomal subunit protein bL28 (Gloeobacter violaceus (strain ATCC 29082 / PCC 7421)).